Consider the following 275-residue polypeptide: Digeranylgeranylglyceryl phosphate synthase (275 aa).

8 helical membrane-spanning segments follow: residues 12–32, 35–55, 88–108, 125–145, 146–166, 200–220, 224–244, and 255–275; these read VHNV…ATTW, TPLF…GYVI, IVLF…PFGF, KLGL…AYYG, GLAS…IFFF, WIIA…PYFL, VIYL…LILH, and SLMK…SLRI.

The protein belongs to the UbiA prenyltransferase family. DGGGP synthase subfamily. It depends on Mg(2+) as a cofactor.

It localises to the cell membrane. It catalyses the reaction sn-3-O-(geranylgeranyl)glycerol 1-phosphate + (2E,6E,10E)-geranylgeranyl diphosphate = 2,3-bis-O-(geranylgeranyl)-sn-glycerol 1-phosphate + diphosphate. Its pathway is membrane lipid metabolism; glycerophospholipid metabolism. Its function is as follows. Prenyltransferase that catalyzes the transfer of the geranylgeranyl moiety of geranylgeranyl diphosphate (GGPP) to the C2 hydroxyl of (S)-3-O-geranylgeranylglyceryl phosphate (GGGP). This reaction is the second ether-bond-formation step in the biosynthesis of archaeal membrane lipids. The chain is Digeranylgeranylglyceryl phosphate synthase from Sulfolobus acidocaldarius (strain ATCC 33909 / DSM 639 / JCM 8929 / NBRC 15157 / NCIMB 11770).